Reading from the N-terminus, the 567-residue chain is Urease subunit alpha (567 aa).

In terms of domain architecture, Urease spans 130–567; the sequence is GGIDTHIHFI…LPLAQRYFLF (438 aa). Residues histidine 135, histidine 137, and lysine 218 each contribute to the Ni(2+) site. Lysine 218 carries the N6-carboxylysine modification. Histidine 220 lines the substrate pocket. Histidine 247 and histidine 273 together coordinate Ni(2+). Histidine 321 acts as the Proton donor in catalysis. Aspartate 361 lines the Ni(2+) pocket.

It belongs to the metallo-dependent hydrolases superfamily. Urease alpha subunit family. Heterotrimer of UreA (gamma), UreB (beta) and UreC (alpha) subunits. Three heterotrimers associate to form the active enzyme. It depends on Ni cation as a cofactor. Post-translationally, carboxylation allows a single lysine to coordinate two nickel ions.

The protein resides in the cytoplasm. The enzyme catalyses urea + 2 H2O + H(+) = hydrogencarbonate + 2 NH4(+). Its pathway is nitrogen metabolism; urea degradation; CO(2) and NH(3) from urea (urease route): step 1/1. This chain is Urease subunit alpha, found in Methylobacillus flagellatus (strain ATCC 51484 / DSM 6875 / VKM B-1610 / KT).